Consider the following 638-residue polypeptide: Probable potassium transport system protein Kup (638 aa).

Transmembrane regions (helical) follow at residues 25–45 (LAIAAIGVVFGDIGTSPLYSL), 65–85 (VISLLFWAIILVVGIKYLLFV), 114–134 (AGALMALGIFGACMFYGDAVI), 152–172 (PHLSHLVLPITIVILIALFWI), 184–204 (FGPIMVLWFVAIAALGVYHIV), 226–246 (LLQAYVVLGSVVLVLTGAEAL), 262–282 (AYGLVMPSLVLNYFGQGALLI), 291–311 (PFFLLAPEWGLLPLVILSTVA), 352–372 (IYVPVVNWLLLFVILCIVIGF), 382–402 (YGIAVTATMVITTVLAAVVMV), 410–430 (LLVGAIIAVFLAVDLGFFGAN), and 434–454 (VAQGGWLPLGIGALLFFLLMT).

Belongs to the HAK/KUP transporter (TC 2.A.72) family.

It is found in the cell inner membrane. The enzyme catalyses K(+)(in) + H(+)(in) = K(+)(out) + H(+)(out). In terms of biological role, transport of potassium into the cell. Likely operates as a K(+):H(+) symporter. The sequence is that of Probable potassium transport system protein Kup from Burkholderia lata (strain ATCC 17760 / DSM 23089 / LMG 22485 / NCIMB 9086 / R18194 / 383).